The primary structure comprises 177 residues: Peptide methionine sulfoxide reductase MsrA (177 aa).

Residue cysteine 14 is part of the active site.

It belongs to the MsrA Met sulfoxide reductase family.

The enzyme catalyses L-methionyl-[protein] + [thioredoxin]-disulfide + H2O = L-methionyl-(S)-S-oxide-[protein] + [thioredoxin]-dithiol. The catalysed reaction is [thioredoxin]-disulfide + L-methionine + H2O = L-methionine (S)-S-oxide + [thioredoxin]-dithiol. Functionally, has an important function as a repair enzyme for proteins that have been inactivated by oxidation. Catalyzes the reversible oxidation-reduction of methionine sulfoxide in proteins to methionine. The polypeptide is Peptide methionine sulfoxide reductase MsrA (Bacillus velezensis (strain DSM 23117 / BGSC 10A6 / LMG 26770 / FZB42) (Bacillus amyloliquefaciens subsp. plantarum)).